The following is a 299-amino-acid chain: N-acetylmuramic acid 6-phosphate etherase (299 aa).

The region spanning 57 to 220 is the SIS domain; the sequence is ISAAFHKKGR…TTGAMIRTGK (164 aa). The active-site Proton donor is the glutamate 85. Glutamate 116 is an active-site residue.

This sequence belongs to the GCKR-like family. MurNAc-6-P etherase subfamily. Homodimer.

The catalysed reaction is N-acetyl-D-muramate 6-phosphate + H2O = N-acetyl-D-glucosamine 6-phosphate + (R)-lactate. Its pathway is amino-sugar metabolism; 1,6-anhydro-N-acetylmuramate degradation. It functions in the pathway amino-sugar metabolism; N-acetylmuramate degradation. The protein operates within cell wall biogenesis; peptidoglycan recycling. Its function is as follows. Specifically catalyzes the cleavage of the D-lactyl ether substituent of MurNAc 6-phosphate, producing GlcNAc 6-phosphate and D-lactate. Together with AnmK, is also required for the utilization of anhydro-N-acetylmuramic acid (anhMurNAc) either imported from the medium or derived from its own cell wall murein, and thus plays a role in cell wall recycling. The polypeptide is N-acetylmuramic acid 6-phosphate etherase (Psychromonas ingrahamii (strain DSM 17664 / CCUG 51855 / 37)).